A 488-amino-acid polypeptide reads, in one-letter code: Protein kinase C and casein kinase substrate in neurons 2 protein (488 aa).

In terms of domain architecture, F-BAR spans 11–282 (VEVSSDSFWE…SIKAADAVED (272 aa)). Residues 25–274 (KRTVKRIDDG…GIYRELEQSI (250 aa)) are a coiled coil. An N6-acetyllysine modification is found at Lys53. Residues 163-176 (CKEEKLAVSREANS) are compositionally biased toward basic and acidic residues. Positions 163-183 (CKEEKLAVSREANSKADPSLN) are disordered. Ser273 carries the post-translational modification Phosphoserine. The residue at position 315 (Ser315) is a Phosphoserine; by PKC. Positions 316–429 (RREKKKAADG…PFDEDTTSGT (114 aa)) are disordered. Residues 329–364 (TGINQTGDQSGQNKPSSNLSVPSNPAQSTQLQSSYN) show a composition bias toward polar residues. The NPF1 motif lies at 364–366 (NPF). Position 375 is a phosphoserine; by IKKB (Ser375). A compositionally biased stretch (polar residues) spans 386–396 (NVSSYEKTQNY). Ser401 carries the post-translational modification Phosphoserine. The segment covering 406-418 (NNPFSSTDANGDS) has biased composition (polar residues). Residues 407–409 (NPF) carry the NPF2 motif. The NPF3 motif lies at 419 to 421 (NPF). Residues 428 to 488 (GTEVRVRALY…YPANYVEAIQ (61 aa)) enclose the SH3 domain. Ser448 bears the Phosphoserine mark.

Belongs to the PACSIN family. In terms of assembly, homodimer. May form heterooligomers with other PACSINs. Interacts (via NPF motifs) with EHD1 (via EH domain). Interacts with EHD3. Interacts (via the SH3 domain) with MICALL1. Interacts with RAC1. Interacts (via SH3 domain) with DNM1, SYN1, SYNJ1 and WASL. Interacts with CAV1. Interacts with TRPV4. Forms a complex with EHD4 and MICALL1; the complex controls CDH5 trafficking and coordinates angiogenesis. In terms of processing, phosphorylated by casein kinase 2 (CK2) and protein kinase C (PKC). Phosphorylation by PKC probably decreases the membrane binding and tubulation capacities of PACSIN2, thereby modulating the lifetime of caveolae. As to expression, widely expressed (at protein level). Isoforms 1/3 are predominantly expressed in heart and in PC-12 cells, a pheochromocytoma cell line (at protein level). Isoforms 2/4 are widely expressed with highest levels in muscle, testis and brain (at protein level).

Its subcellular location is the cytoplasm. The protein localises to the cytoskeleton. The protein resides in the cytoplasmic vesicle membrane. It is found in the cell projection. It localises to the ruffle membrane. Its subcellular location is the early endosome. The protein localises to the recycling endosome membrane. The protein resides in the cell membrane. It is found in the membrane. It localises to the caveola. Its subcellular location is the cell junction. The protein localises to the adherens junction. Functionally, regulates the morphogenesis and endocytosis of caveolae. Lipid-binding protein that is able to promote the tubulation of the phosphatidic acid-containing membranes it preferentially binds. Plays a role in intracellular vesicle-mediated transport. Involved in the endocytosis of cell-surface receptors like the EGF receptor, contributing to its internalization in the absence of EGF stimulus. Facilitates endothelial front-rear polarity during migration by recruiting EHD4 and MICALL1 to asymmetric adherens junctions between leader and follower cells. The protein is Protein kinase C and casein kinase substrate in neurons 2 protein (Pacsin2) of Rattus norvegicus (Rat).